The primary structure comprises 182 residues: Probable peptidyl-prolyl cis-trans isomerase A (182 aa).

The region spanning 13 to 181 is the PPIase cyclophilin-type domain; sequence QNATATLHTN…EPVVIDSITI (169 aa). Residues 161–182 are disordered; that stretch reads TTATDGNDRPTEPVVIDSITIS.

Belongs to the cyclophilin-type PPIase family.

It is found in the cytoplasm. It carries out the reaction [protein]-peptidylproline (omega=180) = [protein]-peptidylproline (omega=0). In terms of biological role, PPIases accelerate the folding of proteins. It catalyzes the cis-trans isomerization of proline imidic peptide bonds in oligopeptides. This is Probable peptidyl-prolyl cis-trans isomerase A (ppiA) from Mycobacterium leprae (strain TN).